Consider the following 556-residue polypeptide: 2-succinyl-5-enolpyruvyl-6-hydroxy-3-cyclohexene-1-carboxylate synthase (556 aa).

Belongs to the TPP enzyme family. MenD subfamily. As to quaternary structure, homodimer. The cofactor is Mg(2+). Requires Mn(2+) as cofactor. It depends on thiamine diphosphate as a cofactor.

The enzyme catalyses isochorismate + 2-oxoglutarate + H(+) = 5-enolpyruvoyl-6-hydroxy-2-succinyl-cyclohex-3-ene-1-carboxylate + CO2. It functions in the pathway quinol/quinone metabolism; 1,4-dihydroxy-2-naphthoate biosynthesis; 1,4-dihydroxy-2-naphthoate from chorismate: step 2/7. It participates in quinol/quinone metabolism; menaquinone biosynthesis. Catalyzes the thiamine diphosphate-dependent decarboxylation of 2-oxoglutarate and the subsequent addition of the resulting succinic semialdehyde-thiamine pyrophosphate anion to isochorismate to yield 2-succinyl-5-enolpyruvyl-6-hydroxy-3-cyclohexene-1-carboxylate (SEPHCHC). The polypeptide is 2-succinyl-5-enolpyruvyl-6-hydroxy-3-cyclohexene-1-carboxylate synthase (Escherichia coli (strain UTI89 / UPEC)).